The chain runs to 402 residues: MAAAGRAARPLVAGGRQLRVPLRWRGQVAAAAPSTKPQAEPETRKPKTGILMLNMGGPERLDDVHDFLLRLFLDRDLMTLPAQNKLAPFIAKRRTPRIQEQYSRIGGGSPIKKWTAVQGEGMVKLLDSMSPQTAPHKYYIGFRYVHPLTEEAIEEMEDDGIERAIAFTQYPQYSCSTTGSSLNAIYRYYNKKGKKPKMKWSIIDRWPTHPLLIQCFADHIQKELDLFPPDKRKDVVILFSAHSLPMSVVNRGDPYPQEVGATVQRVMEKLNHSNPYRLVWQSKVGPMPWLVPQTDETIKGLCQRGKKNMLLVPIAFTSDHIETLYELDIEYAQVLANECGVENIRRAESLNGNPLFSKALADLVCSHIQSNEICSKQLTLCCPLCVNPVCRETKAFFTNQQL.

The transit peptide at 1 to 33 (MAAAGRAARPLVAGGRQLRVPLRWRGQVAAAAP) directs the protein to the mitochondrion. Protoporphyrin IX contacts are provided by Arg-94, Tyr-102, and Ser-109. Cys-175 contacts [2Fe-2S] cluster. Active-site residues include His-209 and Asp-362. [2Fe-2S] cluster contacts are provided by Cys-382, Cys-385, and Cys-390.

It belongs to the ferrochelatase family. In terms of assembly, homodimer. Homotetramer. Requires [2Fe-2S] cluster as cofactor.

The protein resides in the mitochondrion inner membrane. The catalysed reaction is heme b + 2 H(+) = protoporphyrin IX + Fe(2+). It participates in porphyrin-containing compound metabolism; protoheme biosynthesis; protoheme from protoporphyrin-IX: step 1/1. In terms of biological role, catalyzes the ferrous insertion into protoporphyrin IX. In Gallus gallus (Chicken), this protein is Ferrochelatase, mitochondrial.